The primary structure comprises 124 residues: UPF0102 protein Noca_3248 (124 aa).

It belongs to the UPF0102 family.

The polypeptide is UPF0102 protein Noca_3248 (Nocardioides sp. (strain ATCC BAA-499 / JS614)).